Consider the following 419-residue polypeptide: MKFTELTVTEFDNFVQNPSLESHYFQVKENIVTRENDGFEVVLLGIKDDNNKVIAASLFSKIPTMGSYVYYSNRGPVMDFSDLGLVDYYLKELDKYLQQHQCLYVKLDPYWLYHLYDKDIVPFEGREKNDALVNLFKSHGYEHHGFTTEYDTSSQVRWMGVLNLEGKTPETLKKTFDSQRKRNINKAINYGVKVRFLESDEFNLFLDLYRETEERAGFVSKTDDYFYNFIDTYGDKVLVPLAYIDLDEYVLKLQQELNDKENRRDQMMAKENKSDKQMKKIAELDKQIDHDQHELLNASELSKTDGPILNLASGVYFANAYEVNYFSGGSSEKYNQFMGPYMMHWFMINYCFDNGYDRYNFYGLSGDFTENSEDYGVYRFKRGFNVQIEELIGDFYKPIHKVKYWLFTTLDKLRKKLKK.

Belongs to the FemABX family. In terms of assembly, homodimer. Interacts with FemA.

The protein localises to the cytoplasm. The catalysed reaction is MurNAc-L-Ala-D-isoglutaminyl-L-Lys-(N(6)-tri-Gly)-D-Ala-D-Ala-diphospho-di-trans,octa-cis-undecaprenyl-GlcNAc + 2 glycyl-tRNA(Gly) = MurNAc-L-Ala-D-isoglutaminyl-L-Lys-(N(6)-penta-Gly)-D-Ala-D-Ala-diphospho-di-trans,octa-cis-undecaprenyl-GlcNAc + 2 tRNA(Gly) + 2 H(+). Functionally, catalyzes the formation of the pentaglycine interpeptide bridge, which is characteristic of the S.aureus peptidoglycan. Adds glycines 4 and 5 of the pentaglycine bridge, using glycyl-tRNA(Gly) as donor. Involved in resistance to methicillin. In Staphylococcus aureus (strain MW2), this protein is Aminoacyltransferase FemB (femB).